The primary structure comprises 488 residues: Beta-1,3-glucan-binding protein (488 aa).

A signal peptide spans 1-17 (MFVTFICFLACLTCSYG). The tract at residues 18-135 (QPRAQQYVVP…GTPADTSLEP (118 aa)) is binds to curdlan, laminarihexaose and laminarin. The complex formation with laminarin induces self-association of the complexes into a macro structure, likely containing six protein and three laminarin molecules. The macro structures may form a platform on a microbial surface for recruitment of downstream proteases, as a means of amplification of the initial signal of pathogen recognition for the activation of the phenoloxidase cascade. Residues 18 to 198 (QPRAQQYVVP…LKDLANWEAE (181 aa)) form a binds to curdlan, lipopolysaccharide and lipoteichoic acid, activates the phenoloxidase cascade and is resistant to proteolytic degradation by trypsin or chymotrypsin, but is not as effective as the full-length protein in aggregation of microorganisms region. Residues 24–123 (YVVPSAKLEA…GEWTVTEFVN (100 aa)) enclose the CBM39 domain. The interval 24-127 (YVVPSAKLEA…VTEFVNEDGT (104 aa)) is binds to laminarihexaose and laminarin. Residues Asp-72, 99-101 (WTY), and Arg-110 each bind substrate. The segment at 125–158 (DGTPADTSLEPTTAPTPVRPDQPNQPIPTHRPDP) is disordered. Positions 129–139 (ADTSLEPTTAP) are enriched in polar residues. The span at 141–150 (PVRPDQPNQP) shows a compositional bias: pro residues. One can recognise a GH16 domain in the interval 144–488 (PDQPNQPIPT…KVDYVRVYAL (345 aa)). The interval 199–488 (VKFPEEPDYP…KVDYVRVYAL (290 aa)) is binds to laminarin, but not to curdlan, does not activate the phenoloxidase cascade, is susceptible to proteinase digestion by trypsin or chymotrypsin and does not cause aggregation of microorganisms. 2 N-linked (GlcNAc...) asparagine glycosylation sites follow: Asn-373 and Asn-453.

Belongs to the insect beta-1,3-glucan binding protein family. As to quaternary structure, monomer. The N-terminus is blocked. In terms of tissue distribution, fat body and hemolymph.

The protein localises to the secreted. In terms of biological role, involved in the recognition of invading microorganisms causing their aggregation. Activates the phenoloxidase cascade. Binds specifically to beta-1,3-glucan. Binds to curdlan, a linear water-insoluble beta-1,3-glucan polysaccharide, and to laminarin, a water-soluble beta-1,3-glucan polysaccharide containing beta-1,6 branches. Also binds to lipopolysaccharide and lipoteichoic acid. The polypeptide is Beta-1,3-glucan-binding protein (Plodia interpunctella (Indianmeal moth)).